Here is a 210-residue protein sequence, read N- to C-terminus: Probable molybdenum cofactor guanylyltransferase (210 aa).

GTP contacts are provided by residues 18–20 (LAG), K31, N59, D86, and D111. Residue D111 coordinates Mg(2+).

It belongs to the MobA family. Mg(2+) is required as a cofactor.

It localises to the cytoplasm. The catalysed reaction is Mo-molybdopterin + GTP + H(+) = Mo-molybdopterin guanine dinucleotide + diphosphate. In terms of biological role, transfers a GMP moiety from GTP to Mo-molybdopterin (Mo-MPT) cofactor (Moco or molybdenum cofactor) to form Mo-molybdopterin guanine dinucleotide (Mo-MGD) cofactor. This chain is Probable molybdenum cofactor guanylyltransferase (nasC), found in Haloferax mediterranei (strain ATCC 33500 / DSM 1411 / JCM 8866 / NBRC 14739 / NCIMB 2177 / R-4) (Halobacterium mediterranei).